The primary structure comprises 312 residues: MNIGILGTGHYLPTNVVTNNDLEKIVDTNDEWIRTRTGIRERRLATEEVDTSDMAFHAALGALEEANLAAEDIDLILVATVTPNTSFPSVACIIQDQLGAKNAAAMDVSAACAGFMYGLITAKQFIDTGAYKHVLVVGAEKLSKITDWSDRTTCVLFGDGAGAAVVGEVGEGKGILSFELGANGAGAKELYLNHDDHIIMNGREVYKFAVRQMPDSTVNVIEQLGLSRDDVDYLVPHQANIRIMEAARERLGISEDKMAKSIEKFGNNSSASIPMALSEAVKEGKIKDNDLIVLVGFGGGLTWGAVALRWGK.

Active-site residues include cysteine 112 and histidine 237. The tract at residues 238 to 242 is ACP-binding; that stretch reads QANIR. Residue asparagine 267 is part of the active site.

Belongs to the thiolase-like superfamily. FabH family. Homodimer.

The protein localises to the cytoplasm. It catalyses the reaction malonyl-[ACP] + acetyl-CoA + H(+) = 3-oxobutanoyl-[ACP] + CO2 + CoA. It participates in lipid metabolism; fatty acid biosynthesis. Functionally, catalyzes the condensation reaction of fatty acid synthesis by the addition to an acyl acceptor of two carbons from malonyl-ACP. Catalyzes the first condensation reaction which initiates fatty acid synthesis and may therefore play a role in governing the total rate of fatty acid production. Possesses both acetoacetyl-ACP synthase and acetyl transacylase activities. Its substrate specificity determines the biosynthesis of branched-chain and/or straight-chain of fatty acids. This Oceanobacillus iheyensis (strain DSM 14371 / CIP 107618 / JCM 11309 / KCTC 3954 / HTE831) protein is Beta-ketoacyl-[acyl-carrier-protein] synthase III.